Reading from the N-terminus, the 212-residue chain is Large ribosomal subunit protein bL25 (212 aa).

The disordered stretch occupies residues M1–L25. Positions K13 to R24 are enriched in basic and acidic residues.

This sequence belongs to the bacterial ribosomal protein bL25 family. CTC subfamily. As to quaternary structure, part of the 50S ribosomal subunit; part of the 5S rRNA/L5/L18/L25 subcomplex. Contacts the 5S rRNA. Binds to the 5S rRNA independently of L5 and L18.

This is one of the proteins that binds to the 5S RNA in the ribosome where it forms part of the central protuberance. The protein is Large ribosomal subunit protein bL25 of Leptospira borgpetersenii serovar Hardjo-bovis (strain JB197).